A 104-amino-acid polypeptide reads, in one-letter code: Large ribosomal subunit protein uL24 (104 aa).

The protein belongs to the universal ribosomal protein uL24 family. In terms of assembly, part of the 50S ribosomal subunit.

In terms of biological role, one of two assembly initiator proteins, it binds directly to the 5'-end of the 23S rRNA, where it nucleates assembly of the 50S subunit. Its function is as follows. One of the proteins that surrounds the polypeptide exit tunnel on the outside of the subunit. The sequence is that of Large ribosomal subunit protein uL24 from Rhodopseudomonas palustris (strain BisA53).